Consider the following 86-residue polypeptide: Toxin ICK-18 (86 aa).

The signal sequence occupies residues 1-19 (MKTIFALVFCCAIAVVVLG). 4 disulfides stabilise this stretch: Cys35–Cys49, Cys42–Cys61, Cys48–Cys76, and Cys79–Cys86.

Belongs to the neurotoxin 21 family. As to expression, expressed by the venom gland.

The protein localises to the secreted. Functionally, probable neurotoxin with ion channel impairing activity. The polypeptide is Toxin ICK-18 (Trittame loki (Brush-footed trapdoor spider)).